The sequence spans 162 residues: Beta-lactoglobulin-1 (162 aa).

2 disulfides stabilise this stretch: Cys-66–Cys-160 and Cys-106–Cys-119.

The protein belongs to the calycin superfamily. Lipocalin family. Monomer. As to expression, synthesized in mammary gland and secreted in milk.

The protein localises to the secreted. Primary component of whey, it binds retinol and is probably involved in the transport of that molecule. The protein is Beta-lactoglobulin-1 (LGB1) of Equus asinus (Donkey).